Here is a 467-residue protein sequence, read N- to C-terminus: Dimethylamine methyltransferase MtbB1 (467 aa).

Residue Pyl356 is a non-standard amino acid, pyrrolysine.

The protein belongs to the dimethylamine methyltransferase family. In terms of assembly, may form homotetramers or homopentamers.

It catalyses the reaction Co(I)-[dimethylamine-specific corrinoid protein] + dimethylamine + H(+) = methyl-Co(III)-[dimethylamine-specific corrinoid protein] + methylamine. The protein operates within one-carbon metabolism; methanogenesis from dimethylamine. Its function is as follows. Catalyzes the transfer of a methyl group from dimethylamine to the corrinoid cofactor of MtbC. The major or perhaps only DMA methyltransferase expressed under inducing conditions. This is Dimethylamine methyltransferase MtbB1 from Methanosarcina barkeri.